A 427-amino-acid polypeptide reads, in one-letter code: Mannosylglucosylglycerate synthase (427 aa).

Belongs to the glycosyltransferase group 1 family. Co(2+) is required as a cofactor. It depends on Mg(2+) as a cofactor. Mn(2+) serves as cofactor. Requires Ni(2+) as cofactor.

It catalyses the reaction (2R)-2-O-(alpha-D-glucopyranosyl)-glycerate + GDP-alpha-D-mannose = (2R)-2-O-[alpha-D-mannopyranosyl-(1-&gt;2)-alpha-D-glucopyranosyl]-glycerate + GDP + H(+). Its function is as follows. Catalyzes the synthesis of mannosylglucosylglycerate (MGG) from glucosylglycerate (GG) and GDP-mannose. This chain is Mannosylglucosylglycerate synthase, found in Thermotoga maritima (strain ATCC 43589 / DSM 3109 / JCM 10099 / NBRC 100826 / MSB8).